A 229-amino-acid polypeptide reads, in one-letter code: ATP-dependent dethiobiotin synthetase BioD (229 aa).

12 to 17 is a binding site for ATP; it reads GAGKTI. Thr-16 contributes to the Mg(2+) binding site. Residue Lys-38 is part of the active site. ATP contacts are provided by residues Asp-46, 105–108, and 165–166; these read EGVG and SE. Mg(2+) is bound by residues Asp-46 and Glu-105.

This sequence belongs to the dethiobiotin synthetase family. Homodimer. Requires Mg(2+) as cofactor.

The protein resides in the cytoplasm. It catalyses the reaction (7R,8S)-7,8-diammoniononanoate + CO2 + ATP = (4R,5S)-dethiobiotin + ADP + phosphate + 3 H(+). It carries out the reaction (7R,8S)-8-amino-7-(carboxyamino)nonanoate + ATP = (4R,5S)-dethiobiotin + ADP + phosphate + H(+). It participates in cofactor biosynthesis; biotin biosynthesis; biotin from 7,8-diaminononanoate: step 1/2. Functionally, catalyzes a mechanistically unusual reaction, the ATP-dependent insertion of CO2 between the N7 and N8 nitrogen atoms of 7,8-diaminopelargonic acid (DAPA, also called 7,8-diammoniononanoate) to form a ureido ring. This cyanobacterium does not encode bioA (which catalyzes the formation of the precursor for this reaction in the cannonical pathway), instead it encodes bioU, which replaces bioA and also performs the first half of the cannonical BioD reaction. Thus in this organism BioD has a different substrate. In Gloeobacter violaceus (strain ATCC 29082 / PCC 7421), this protein is ATP-dependent dethiobiotin synthetase BioD.